Reading from the N-terminus, the 112-residue chain is M-myrmeciitoxin-Mp1 (112 aa).

An N-terminal signal peptide occupies residues 1–26 (MKLSCLLLTLTIIFVLTIVHAPNVEA). Residues 27-56 (KDLADPESEAVGFADAFGEADAVGEADPNA) constitute a propeptide that is removed on maturation. The interval 57–78 (GLGSVFGRLARILGRVIPKVAK) is critical for cytotoxic activity. Residues 93–106 (KEAIPMAVEMAKSQ) are igE-binding determinant.

Belongs to the formicidae venom precursor-01 superfamily. Ant pilosulin family. Expressed by the venom gland.

The protein localises to the secreted. Its function is as follows. Has strong cytotoxic and hemolytic activities. Is more potent against mononuclear leukocytes than against granulocytes. The synthesized peptide 57-76 shows a potent and broad spectrum antimicrobial activity against both Gram-positive and Gram-negative bacteria, and also against the fungus C.albicans. Adopts an alpha-helical structure. In Myrmecia pilosula (Jack jumper ant), this protein is M-myrmeciitoxin-Mp1.